A 249-amino-acid chain; its full sequence is Transmembrane protein 150C (249 aa).

At Met1 to Trp9 the chain is on the cytoplasmic side. The chain crosses the membrane as a helical span at residues Met10 to Ile30. Residues Ala31 to Ala64 lie on the Extracellular side of the membrane. Residues Ser65 to Leu85 form a helical membrane-spanning segment. Topologically, residues Arg86–Pro97 are cytoplasmic. Residues Trp98–Gly118 form a helical membrane-spanning segment. Residues Asn119–Asn130 lie on the Extracellular side of the membrane. The chain crosses the membrane as a helical span at residues Val131–Thr151. The Cytoplasmic portion of the chain corresponds to Leu152–Val168. A helical transmembrane segment spans residues Ile169 to Ile189. Residues His190–Tyr192 are Extracellular-facing. The chain crosses the membrane as a helical span at residues Ala193–Val213. The Cytoplasmic portion of the chain corresponds to Glu214–Val249.

It belongs to the DRAM/TMEM150 family.

The protein resides in the cell membrane. It is found in the lysosome membrane. It carries out the reaction Ca(2+)(in) = Ca(2+)(out). The catalysed reaction is Na(+)(in) = Na(+)(out). The enzyme catalyses K(+)(in) = K(+)(out). It catalyses the reaction Mg(2+)(in) = Mg(2+)(out). Functionally, nonselective cationic channel with high permeability to Ca(2+). Component of a mechanosensitive cation channel, confers mechanically activated (MA) currents with slow inactivation kinetics. May contribute to proprioception. The polypeptide is Transmembrane protein 150C (Homo sapiens (Human)).